The chain runs to 245 residues: Uridylate kinase (245 aa).

Residue 15 to 18 coordinates ATP; the sequence is KLSG. The interval 23–28 is involved in allosteric activation by GTP; sequence GDEGFG. Glycine 57 contributes to the UMP binding site. ATP contacts are provided by glycine 58 and arginine 62. Residues aspartate 77 and 138–145 each bind UMP; that span reads TGNPFCTT. Positions 165, 171, and 174 each coordinate ATP.

This sequence belongs to the UMP kinase family. In terms of assembly, homohexamer.

Its subcellular location is the cytoplasm. It carries out the reaction UMP + ATP = UDP + ADP. Its pathway is pyrimidine metabolism; CTP biosynthesis via de novo pathway; UDP from UMP (UMPK route): step 1/1. With respect to regulation, allosterically activated by GTP. Inhibited by UTP. Functionally, catalyzes the reversible phosphorylation of UMP to UDP. This is Uridylate kinase from Shewanella sp. (strain W3-18-1).